Consider the following 146-residue polypeptide: Cytidine deaminase (146 aa).

Residues 13–140 enclose the CMP/dCMP-type deaminase domain; it reads EHVQRLLLSS…ELLPASFGPE (128 aa). 54-56 provides a ligand contact to substrate; sequence NIE. A Zn(2+)-binding site is contributed by cysteine 65. Glutamate 67 (proton donor) is an active-site residue. The Zn(2+) site is built by cysteine 99 and cysteine 102.

This sequence belongs to the cytidine and deoxycytidylate deaminase family. Homotetramer. It depends on Zn(2+) as a cofactor.

It carries out the reaction cytidine + H2O + H(+) = uridine + NH4(+). The enzyme catalyses 2'-deoxycytidine + H2O + H(+) = 2'-deoxyuridine + NH4(+). Functionally, this enzyme scavenges exogenous and endogenous cytidine and 2'-deoxycytidine for UMP synthesis. This is Cytidine deaminase (Cda) from Mus musculus (Mouse).